The following is a 349-amino-acid chain: UPF0324 inner membrane protein YeiH (349 aa).

Topologically, residues 1–12 (MTNITLQKQHRT) are periplasmic. A helical transmembrane segment spans residues 13 to 32 (LWHFIPGLALSAVITGVALW). At 33–35 (GGS) the chain is on the cytoplasmic side. A helical transmembrane segment spans residues 36–58 (IPAVAGAGFSALTLAILLGMVLG). The Periplasmic portion of the chain corresponds to 59-99 (NTIYPHIWKSCDGGVLFAKQYLLRLGIILYGFRLTFSQIAD). The chain crosses the membrane as a helical span at residues 100 to 122 (VGISGIIIDVLTLSSTFLLACFL). The Cytoplasmic portion of the chain corresponds to 123 to 131 (GQKVFGLDK). Residues 132–151 (HTSWLIGAGSSICGAAAVLA) traverse the membrane as a helical segment. The Periplasmic portion of the chain corresponds to 152-162 (TEPVVKAEASK). Residues 163-185 (VTVAVATVVIFGTVAIFLYPAIY) traverse the membrane as a helical segment. The Cytoplasmic portion of the chain corresponds to 186-261 (PLMSQWFSPE…SGTNSGEKSK (76 aa)). Residues 262 to 283 (ITIPWFAILFIVVAIFNSFHLL) traverse the membrane as a helical segment. The Periplasmic segment spans residues 284–289 (PQSVVN). The chain crosses the membrane as a helical span at residues 290–312 (MLVTLDTFLLAMAMAALGLTTHV). At 313–321 (SALKKAGAK) the chain is on the cytoplasmic side. A helical transmembrane segment spans residues 322–344 (PLLMALVLFAWLIVGGGAINYVI). At 345–349 (QSVIA) the chain is on the periplasmic side.

Belongs to the UPF0324 family.

It is found in the cell inner membrane. The protein is UPF0324 inner membrane protein YeiH (yeiH) of Escherichia coli O6:H1 (strain CFT073 / ATCC 700928 / UPEC).